A 479-amino-acid chain; its full sequence is MAQHAVYFPDAFLTQMREAMPSTLSFDEFISACQRPLRRSIRINTLKISVADFLALIAPYGWSLTPIPWCHEGFWIERDDEEALPLGSTAEHLSGLFYIQEASSMLPVAALFADDNHPQRVMDMAAAPGSKTTQIAARMGNRGAILANEFSASRVKVLHANISRCGIANTALTHFDGRVFGAALPEMFDAILLDAPCSGEGVVRKDPDALKNWSPESNLDIAATQRELLDSAFHALRPGGTLVYSTCTLNRQENEAVCLWLKETYADAVEFLPLGDLFPDADRALTPEGFLHVFPQIYDCEGFFVARLRKMSSLPAMPAPGYKVGAFPFTSLKGREALNVTQAANAVGLLWDENLHLWQREKEVWLFPAEIESLIGKVRFSRLGIKLAESHNKGYRWQHEATIALACPTHAHAFELSVQEAEEWYRGRDIYPQTPPAADDVLVTFQHQPLGLAKRIGARIKNSYPRELVRDGKLFTGNS.

S-adenosyl-L-methionine is bound by residues 125-131 (AAAPGSK), E149, D176, and D194. The active-site Nucleophile is C247.

Belongs to the class I-like SAM-binding methyltransferase superfamily. RsmB/NOP family.

It is found in the cytoplasm. The enzyme catalyses cytidine(1407) in 16S rRNA + S-adenosyl-L-methionine = 5-methylcytidine(1407) in 16S rRNA + S-adenosyl-L-homocysteine + H(+). Functionally, specifically methylates the cytosine at position 1407 (m5C1407) of 16S rRNA. The chain is Ribosomal RNA small subunit methyltransferase F from Salmonella typhi.